Consider the following 298-residue polypeptide: Protoheme IX farnesyltransferase (298 aa).

The next 9 membrane-spanning stretches (helical) occupy residues 23–43 (LLLLFTMYTAYIVGGGLGKPY), 47–67 (LVVLTLGFITIAAVTALNMYF), 93–113 (VFIATVAATIVSVILAWRIIN), 115–135 (HFALAIVIGFLFDIVAYTYLL), 143–163 (IIAGAVAGGAPALGGWAAAAG), 169–189 (ALLFSLIVATWVPSHIWFLAT), 211–231 (IAVASGIGLGSLVMGYSIVGL), 236–256 (VIGTVSLIVGVIAAIAIFHLA), and 278–298 (MMLGLVFLVMMLEKVVSYIIS).

This sequence belongs to the UbiA prenyltransferase family. Protoheme IX farnesyltransferase subfamily.

Its subcellular location is the cell membrane. The catalysed reaction is heme b + (2E,6E)-farnesyl diphosphate + H2O = Fe(II)-heme o + diphosphate. The protein operates within porphyrin-containing compound metabolism; heme O biosynthesis; heme O from protoheme: step 1/1. Functionally, converts heme B (protoheme IX) to heme O by substitution of the vinyl group on carbon 2 of heme B porphyrin ring with a hydroxyethyl farnesyl side group. The polypeptide is Protoheme IX farnesyltransferase (Hyperthermus butylicus (strain DSM 5456 / JCM 9403 / PLM1-5)).